Here is a 302-residue protein sequence, read N- to C-terminus: Spermidine synthase (302 aa).

The residue at position 1 (methionine 1) is an N-acetylmethionine. The PABS domain occupies 18 to 253; it reads EGWFRETCSL…GQIGFMLCSK (236 aa). An S-adenosyl 3-(methylsulfanyl)propylamine-binding site is contributed by glutamine 49. Tyrosine 79 lines the putrescine pocket. S-adenosyl 3-(methylsulfanyl)propylamine contacts are provided by residues glutamine 80, aspartate 104, glutamate 124, 155–156, and aspartate 173; that span reads DG. The active-site Proton acceptor is aspartate 173. Putrescine contacts are provided by residues 173-176 and tyrosine 241; that span reads DSSD.

This sequence belongs to the spermidine/spermine synthase family. Homodimer or homotetramer.

The catalysed reaction is S-adenosyl 3-(methylsulfanyl)propylamine + putrescine = S-methyl-5'-thioadenosine + spermidine + H(+). It functions in the pathway amine and polyamine biosynthesis; spermidine biosynthesis; spermidine from putrescine: step 1/1. With respect to regulation, the activity is thought to be regulated mainly by the availability of decarboxylated S-adenosylmethionine. In terms of biological role, catalyzes the production of spermidine from putrescine and decarboxylated S-adenosylmethionine (dcSAM). Has a strong preference for putrescine as substrate, and has very low activity towards 1,3-diaminopropane. Has extremely low activity towards spermidine. The sequence is that of Spermidine synthase (Srm) from Mus musculus (Mouse).